Reading from the N-terminus, the 92-residue chain is Small ribosomal subunit protein uS19 (92 aa).

Belongs to the universal ribosomal protein uS19 family.

Functionally, protein S19 forms a complex with S13 that binds strongly to the 16S ribosomal RNA. The sequence is that of Small ribosomal subunit protein uS19 from Rippkaea orientalis (strain PCC 8801 / RF-1) (Cyanothece sp. (strain PCC 8801)).